A 418-amino-acid polypeptide reads, in one-letter code: Trans-acting enoyl reductase (418 aa).

Belongs to the saccharopine dehydrogenase family. Enoyl reductase subfamily.

Functionally, involved in the reduction of the double bond between C-4 and C-5 during phthiocerol dimycocerosates (DIM A) and glycosylated phenolphthiocerol dimycocerosates (PGL) biosynthesis. The polypeptide is Trans-acting enoyl reductase (Mycobacterium ulcerans (strain Agy99)).